The primary structure comprises 352 residues: Chorismate synthase (352 aa).

NADP(+) is bound at residue Arg-48. FMN-binding positions include Arg-125–Ser-127, Asn-237–Ala-238, Gly-278, Lys-293–Ser-297, and Arg-319.

It belongs to the chorismate synthase family. In terms of assembly, homotetramer. The cofactor is FMNH2.

It carries out the reaction 5-O-(1-carboxyvinyl)-3-phosphoshikimate = chorismate + phosphate. It participates in metabolic intermediate biosynthesis; chorismate biosynthesis; chorismate from D-erythrose 4-phosphate and phosphoenolpyruvate: step 7/7. Catalyzes the anti-1,4-elimination of the C-3 phosphate and the C-6 proR hydrogen from 5-enolpyruvylshikimate-3-phosphate (EPSP) to yield chorismate, which is the branch point compound that serves as the starting substrate for the three terminal pathways of aromatic amino acid biosynthesis. This reaction introduces a second double bond into the aromatic ring system. The polypeptide is Chorismate synthase (Francisella tularensis subsp. tularensis (strain FSC 198)).